The sequence spans 470 residues: tRNA-2-methylthio-N(6)-dimethylallyladenosine synthase (470 aa).

Residues 5-122 (RKLYVKSFGC…LPELLAEAKA (118 aa)) enclose the MTTase N-terminal domain. 6 residues coordinate [4Fe-4S] cluster: cysteine 14, cysteine 50, cysteine 85, cysteine 163, cysteine 167, and cysteine 170. One can recognise a Radical SAM core domain in the interval 149 to 383 (RSRGPAAFVT…LLEASKAAFD (235 aa)). The TRAM domain occupies 384 to 446 (ESCRGRTFDI…PNSLAGVPAE (63 aa)). The tract at residues 439–470 (SLAGVPAEASEPSVSQSPVSSARSRPLAAMEA) is disordered. Positions 444 to 464 (PAEASEPSVSQSPVSSARSRP) are enriched in low complexity.

Belongs to the methylthiotransferase family. MiaB subfamily. Monomer. [4Fe-4S] cluster serves as cofactor.

Its subcellular location is the cytoplasm. The enzyme catalyses N(6)-dimethylallyladenosine(37) in tRNA + (sulfur carrier)-SH + AH2 + 2 S-adenosyl-L-methionine = 2-methylsulfanyl-N(6)-dimethylallyladenosine(37) in tRNA + (sulfur carrier)-H + 5'-deoxyadenosine + L-methionine + A + S-adenosyl-L-homocysteine + 2 H(+). In terms of biological role, catalyzes the methylthiolation of N6-(dimethylallyl)adenosine (i(6)A), leading to the formation of 2-methylthio-N6-(dimethylallyl)adenosine (ms(2)i(6)A) at position 37 in tRNAs that read codons beginning with uridine. The polypeptide is tRNA-2-methylthio-N(6)-dimethylallyladenosine synthase (Xanthobacter autotrophicus (strain ATCC BAA-1158 / Py2)).